Reading from the N-terminus, the 199-residue chain is Fe/S biogenesis protein NfuA (199 aa).

The [4Fe-4S] cluster site is built by Cys-151 and Cys-154.

The protein belongs to the NfuA family. As to quaternary structure, homodimer. Requires [4Fe-4S] cluster as cofactor.

Functionally, involved in iron-sulfur cluster biogenesis. Binds a 4Fe-4S cluster, can transfer this cluster to apoproteins, and thereby intervenes in the maturation of Fe/S proteins. Could also act as a scaffold/chaperone for damaged Fe/S proteins. The polypeptide is Fe/S biogenesis protein NfuA (Stenotrophomonas maltophilia (strain K279a)).